The primary structure comprises 1150 residues: ATP-dependent DNA helicase Q-like 4B (1150 aa).

Disordered regions lie at residues 124-143 (TPAIDNDSTSRTSSTKGSTF) and 154-179 (CAHNHPEHSQRSVRGTAKSIDSFSSS). Residues 132–142 (TSRTSSTKGST) show a composition bias toward low complexity. Positions 327 to 361 (DHVEQLHQKRLLLKKQIQQLEILIHNKERKKSQCL) form a coiled coil. Residues 416 to 428 (YDISSGSEEREQS) are compositionally biased toward basic and acidic residues. The segment at 416–446 (YDISSGSEEREQSVSEVIDVTDTESSNDKKW) is disordered. The region spanning 478–653 (INATMSGCDV…VQALGLVNCV (176 aa)) is the Helicase ATP-binding domain. 491–498 (MPTGGGKS) is an ATP binding site. The DEAH box signature appears at 597 to 600 (DEAH). A Helicase C-terminal domain is found at 678 to 823 (DIDKFIRENH…QMKMGYNCKA (146 aa)). In terms of domain architecture, HRDC spans 1029–1111 (SNLSGILLTA…DSTINDHYKT (83 aa)). A disordered region spans residues 1106-1150 (NDHYKTRPGSGKRRRDENVNPNVAEDDDPDWSASQSHKKVVKNKK). Residues 1141–1150 (SHKKVVKNKK) show a composition bias toward basic residues.

Belongs to the helicase family. RecQ subfamily. Mg(2+) serves as cofactor. The cofactor is Mn(2+). In terms of tissue distribution, mostly expressed in roots, seedlings, shoots, shoot apical mersitem, flowers, and siliques.

The protein resides in the nucleus. The enzyme catalyses Couples ATP hydrolysis with the unwinding of duplex DNA by translocating in the 3'-5' direction.. It carries out the reaction ATP + H2O = ADP + phosphate + H(+). In terms of biological role, 3'-5' DNA helicase that may play a role in the repair of DNA. Required to promote but not to suppress crossovers. The chain is ATP-dependent DNA helicase Q-like 4B (RECQL4B) from Arabidopsis thaliana (Mouse-ear cress).